The following is a 1095-amino-acid chain: Actin cross-linking toxin VgrG1 (1095 aa).

The region spanning Thr-712–Val-1095 is the ACD domain. ATP is bound at residue Ser-723 to Glu-727. Mg(2+) is bound by residues Glu-727 and Glu-789. Ser-792 is an ATP binding site. Residue Gln-873 participates in Mg(2+) binding. Position 979 (Arg-979) interacts with ATP. Glu-1050 is a Mg(2+) binding site.

The protein belongs to the VgrG protein family. As to quaternary structure, interacts with protein VC1417. Requires Mg(2+) as cofactor.

It is found in the secreted. The protein resides in the host cytoplasm. Its subcellular location is the host cytosol. Its function is as follows. Part of the type VI secretion system (T6SS) specialized secretion system, which delivers several virulence factors in both prokaryotic and eukaryotic cells during infection. Forms the spike at the tip of the elongating tube probably formed by hemolysin co-regulated protein/Hcp. Allows the delivery of the TseL antibacterial toxin to target cells where it exerts its toxicity. Also acts directly as an actin-directed toxin that catalyzes the covalent cross-linking of host cytoplasmic monomeric actin. Mediates the cross-link between 'Lys-50' of one monomer and 'Glu-270' of another actin monomer, resulting in formation of highly toxic actin oligomers that cause cell rounding. The toxin can be highly efficient at very low concentrations by acting on formin homology family proteins: toxic actin oligomers bind with high affinity to formins and adversely affect both nucleation and elongation abilities of formins, causing their potent inhibition in both profilin-dependent and independent manners. Acts as an acid--amino-acid ligase that transfers the gamma-phosphoryl group of ATP to the 'Glu-270' actin residue, resulting in the formation of an activated acyl phosphate intermediate. This intermediate is further hydrolyzed and the energy of hydrolysis is utilized for the formation of the amide bond between actin subunits. The chain is Actin cross-linking toxin VgrG1 from Vibrio cholerae serotype O1 (strain ATCC 39541 / Classical Ogawa 395 / O395).